A 1422-amino-acid chain; its full sequence is FH1/FH2 domain-containing protein 3 (1422 aa).

The GBD/FH3 domain maps to 18–411 (NSTNFPEPSR…NFGNNSYHSS (394 aa)). 8 disordered regions span residues 323-464 (RHED…RRRQ), 521-666 (ACLA…GVNG), 687-708 (RKSP…QEAE), 754-781 (SGDL…VQPK), 821-849 (LGHR…PPLL), 1262-1305 (QQKQ…SYAE), 1320-1357 (SSPS…SPNV), and 1374-1410 (TQVP…EEAR). Position 345 is a phosphoserine (S345). Over residues 357 to 366 (LDRRRSRRHS) the composition is skewed to basic residues. Residues 367-390 (VQSIKSTLSAPTSPCSQSAPSFKP) show a composition bias toward polar residues. Residue S375 is modified to Phosphoserine. Positions 410–430 (SSRPSSGSSVPTTPTSSVSPP) are enriched in low complexity. Over residues 438–449 (SSPSGLLTSSFR) the composition is skewed to polar residues. Residues 448–480 (FRQHQESLAAERERRRQEREERLQRIEREERNK) are a coiled coil. Positions 450–464 (QHQESLAAERERRRQ) are enriched in basic and acidic residues. Low complexity predominate over residues 521–535 (ACLAPLSHSPSSSDS). Residues 536-547 (QEALTVSASSPG) show a composition bias toward polar residues. Composition is skewed to acidic residues over residues 559–569 (PEPESEAEPEA) and 592–603 (ETEVEQALEQEP). Residues 604–624 (EERASLSEKERQNEGVNERDN) show a composition bias toward basic and acidic residues. Residues 626 to 635 (SASSVSSSSS) show a composition bias toward low complexity. Over residues 637–651 (LEREEKEDKLSRDRT) the composition is skewed to basic and acidic residues. The residue at position 763 (S763) is a Phosphoserine. T775 carries the phosphothreonine modification. Over residues 827–849 (PGPPPPPPPTFLGLPPPPPPPLL) the composition is skewed to pro residues. In terms of domain architecture, FH1 spans 827–858 (PGPPPPPPPTFLGLPPPPPPPLLDSIPPPPVP). In terms of domain architecture, FH2 spans 883 to 1279 (GQPTFTKKKK…HRERNKTRGK (397 aa)). Positions 1264 to 1278 (KQKRANHRERNKTRG) are enriched in basic residues. Residues 1359–1391 (DDAADEIMDRIVKSATQVPSQRVVPRERKRSRA) enclose the DAD domain. Residues 1385–1400 (ERKRSRANRKSLRRTL) are compositionally biased toward basic residues.

This sequence belongs to the formin homology family. Interacts with nestin/NES-based interfilament (IF). Interacts with SQSTM1; isoform 4 threonine phosphorylation disrupts SQSTM1-binding. In terms of processing, phosphorylated on Thr-1474 and Thr-1476 by CK2. In terms of tissue distribution, expressed in the heart, kidney and brain. May be down-regulated in various types of heart diseases, including idiopathic dilated, ventricular dilated, familial dilated and perinatal dilated cardiomyopathies, as well as ischemic heart disease (at protein level).

The protein resides in the cytoplasm. Its subcellular location is the cytoskeleton. The protein localises to the myofibril. It localises to the sarcomere. It is found in the z line. Its function is as follows. Actin-organizing protein that may cause stress fiber formation together with cell elongation. Isoform 4 may play a role in actin filament polymerization in cardiomyocytes. The sequence is that of FH1/FH2 domain-containing protein 3 (FHOD3) from Homo sapiens (Human).